A 182-amino-acid polypeptide reads, in one-letter code: Large ribosomal subunit protein uL5 (182 aa).

Belongs to the universal ribosomal protein uL5 family. As to quaternary structure, part of the 50S ribosomal subunit; part of the 5S rRNA/L5/L18/L25 subcomplex. Contacts the 5S rRNA and the P site tRNA. Forms a bridge to the 30S subunit in the 70S ribosome.

Its function is as follows. This is one of the proteins that bind and probably mediate the attachment of the 5S RNA into the large ribosomal subunit, where it forms part of the central protuberance. In the 70S ribosome it contacts protein S13 of the 30S subunit (bridge B1b), connecting the 2 subunits; this bridge is implicated in subunit movement. Contacts the P site tRNA; the 5S rRNA and some of its associated proteins might help stabilize positioning of ribosome-bound tRNAs. The chain is Large ribosomal subunit protein uL5 from Borreliella burgdorferi (strain ATCC 35210 / DSM 4680 / CIP 102532 / B31) (Borrelia burgdorferi).